The chain runs to 234 residues: MPKILDAIIKASKINKKLLAVLIDPEKFATENYSYFIEKLPEAVTHIFVGGSTATTAQSEVCVDFIKTKTNLPVILFPGDKEQITEKADGILLLSLISGRNPEYLIEQHIKAVPKLLNAGLEIIPTGYLLLDGGNQSAVARVSKTKPIQQDEIELIRNTALAGAMLGKQLVYLEAGSGALIPVSEKVIAEVKRDLNIPLIVGGGIRNATQLKKAYKAGADLVVIGTAFENGEFK.

Asp24 and Ser52 together coordinate Mg(2+). Sn-glycerol 1-phosphate contacts are provided by residues 172-178, 203-204, and 225-226; these read YLEAGSG, GG, and GT.

The protein belongs to the GGGP/HepGP synthase family. Group II subfamily. As to quaternary structure, homodimer. The cofactor is Mg(2+).

The catalysed reaction is sn-glycerol 1-phosphate + (2E,6E,10E)-geranylgeranyl diphosphate = sn-3-O-(geranylgeranyl)glycerol 1-phosphate + diphosphate. Prenyltransferase that catalyzes the transfer of the geranylgeranyl moiety of geranylgeranyl diphosphate (GGPP) to the C3 hydroxyl of sn-glycerol-1-phosphate (G1P). This is Geranylgeranylglyceryl phosphate synthase from Zunongwangia profunda (strain DSM 18752 / CCTCC AB 206139 / SM-A87) (Wangia profunda).